A 304-amino-acid chain; its full sequence is uncharacterized protein (304 aa).

Residues M1–S183 are disordered. Positions P132–S166 are enriched in low complexity. The next 2 membrane-spanning stretches (helical) occupy residues L206 to V226 and F265 to V285.

The protein to M.leprae ML0007.

Its subcellular location is the cell membrane. This is an uncharacterized protein from Mycobacterium tuberculosis (strain ATCC 25618 / H37Rv).